The sequence spans 955 residues: 2-oxoglutarate dehydrogenase E1 component (955 aa).

The protein belongs to the alpha-ketoglutarate dehydrogenase family. As to quaternary structure, homodimer. Part of the 2-oxoglutarate dehydrogenase (OGDH) complex composed of E1 (2-oxoglutarate dehydrogenase), E2 (dihydrolipoamide succinyltransferase) and E3 (dihydrolipoamide dehydrogenase); the complex contains multiple copies of the three enzymatic components (E1, E2 and E3). The cofactor is thiamine diphosphate.

The enzyme catalyses N(6)-[(R)-lipoyl]-L-lysyl-[protein] + 2-oxoglutarate + H(+) = N(6)-[(R)-S(8)-succinyldihydrolipoyl]-L-lysyl-[protein] + CO2. E1 component of the 2-oxoglutarate dehydrogenase (OGDH) complex which catalyzes the decarboxylation of 2-oxoglutarate, the first step in the conversion of 2-oxoglutarate to succinyl-CoA and CO(2). The chain is 2-oxoglutarate dehydrogenase E1 component from Bacillus cereus (strain ATCC 10987 / NRS 248).